The primary structure comprises 257 residues: Glutamate racemase (257 aa).

Residues 12 to 13 and 44 to 45 contribute to the substrate site; these read DS and YG. C75 (proton donor/acceptor) is an active-site residue. 76-77 serves as a coordination point for substrate; that stretch reads NT. The active-site Proton donor/acceptor is C185. Residue 186-187 coordinates substrate; that stretch reads TH.

It belongs to the aspartate/glutamate racemases family.

The catalysed reaction is L-glutamate = D-glutamate. It functions in the pathway cell wall biogenesis; peptidoglycan biosynthesis. In terms of biological role, provides the (R)-glutamate required for cell wall biosynthesis. The polypeptide is Glutamate racemase (Clostridium botulinum (strain ATCC 19397 / Type A)).